A 517-amino-acid chain; its full sequence is Xyloglucan galactosyltransferase XLT2 (517 aa).

The interval 1-31 is disordered; the sequence is MLPVSNPSSPEHLLKKSRTPDSTTSIDRKNS. The Cytoplasmic portion of the chain corresponds to 1–49; the sequence is MLPVSNPSSPEHLLKKSRTPDSTTSIDRKNSFNSLHSVGNRSSYIAASR. The span at 20-31 shows a compositional bias: polar residues; the sequence is PDSTTSIDRKNS. A helical; Signal-anchor for type II membrane protein transmembrane segment spans residues 50 to 70; sequence SHCTWLILSLLSLQLILFLTL. Topologically, residues 71 to 517 are lumenal; that stretch reads RSIPFPHRHI…KEQEKWYKWR (447 aa). N250, N288, N377, and N449 each carry an N-linked (GlcNAc...) asparagine glycan.

This sequence belongs to the glycosyltransferase 47 family. In terms of assembly, interacts with CSLC4, FUT1, XXT2 and XXT5. Expressed in roots, hypocotyls, cotyledons, leaves, stems and flowers.

The protein resides in the golgi apparatus membrane. In terms of biological role, functions in xyloglucan synthesis by adding side chains to the xylosylated glucan backbone. Involved in galactosylating hemicellulose xyloglucan (XyG) at the second position of the XXXG motif to form XLXG. Associates with other xyloglucan-synthesizing enzymes to form multiprotein complexes for xyloglucan synthesis in the Golgi. This is Xyloglucan galactosyltransferase XLT2 from Arabidopsis thaliana (Mouse-ear cress).